Consider the following 291-residue polypeptide: tRNA (guanine-N(1)-)-methyltransferase (291 aa).

S-adenosyl-L-methionine contacts are provided by residues G160 and 184-189 (IGDYVL).

It belongs to the RNA methyltransferase TrmD family. As to quaternary structure, homodimer.

The protein resides in the cytoplasm. The catalysed reaction is guanosine(37) in tRNA + S-adenosyl-L-methionine = N(1)-methylguanosine(37) in tRNA + S-adenosyl-L-homocysteine + H(+). In terms of biological role, specifically methylates guanosine-37 in various tRNAs. The protein is tRNA (guanine-N(1)-)-methyltransferase of Corynebacterium efficiens (strain DSM 44549 / YS-314 / AJ 12310 / JCM 11189 / NBRC 100395).